The chain runs to 488 residues: Malonate-semialdehyde dehydrogenase (488 aa).

7 residues coordinate NAD(+): Ala-150, Phe-152, Lys-176, Glu-179, Arg-180, Ser-229, and Thr-251. The active-site Nucleophile is the Cys-284. Glu-382 contributes to the NAD(+) binding site.

Belongs to the aldehyde dehydrogenase family. IolA subfamily. In terms of assembly, homotetramer.

It carries out the reaction 3-oxopropanoate + NAD(+) + CoA + H2O = hydrogencarbonate + acetyl-CoA + NADH + H(+). It catalyses the reaction 2-methyl-3-oxopropanoate + NAD(+) + CoA + H2O = propanoyl-CoA + hydrogencarbonate + NADH + H(+). It functions in the pathway polyol metabolism; myo-inositol degradation into acetyl-CoA; acetyl-CoA from myo-inositol: step 7/7. Functionally, catalyzes the oxidation of malonate semialdehyde (MSA) and methylmalonate semialdehyde (MMSA) into acetyl-CoA and propanoyl-CoA, respectively. Is involved in a myo-inositol catabolic pathway. Bicarbonate, and not CO2, is the end-product of the enzymatic reaction. The polypeptide is Malonate-semialdehyde dehydrogenase (Listeria monocytogenes serotype 4a (strain HCC23)).